A 334-amino-acid polypeptide reads, in one-letter code: Syntaxin-18 (334 aa).

The Cytoplasmic portion of the chain corresponds to Met-1–Asn-308. Disordered regions lie at residues Gly-29–Ser-50 and Leu-166–Glu-225. Composition is skewed to basic and acidic residues over residues Gly-33 to Ser-50, Leu-166 to Ser-186, and Ser-193 to Leu-207. The t-SNARE coiled-coil homology domain occupies Ile-242–Ala-304. The helical; Anchor for type IV membrane protein transmembrane segment at Ala-309–Leu-329 threads the bilayer. At Asp-330 to Ser-334 the chain is on the vesicular side.

The protein belongs to the syntaxin family. In terms of assembly, component of a SNARE complex consisting of STX18, USE1L, BNIP1/SEC20L, and SEC22B. RINT1/TIP20L and ZW10 are associated with the complex through interaction with BNIP1/SEC20L. Interacts directly with USE1L and BNIP1/SEC20L.

Its subcellular location is the endoplasmic reticulum membrane. The protein localises to the golgi apparatus membrane. Its function is as follows. Syntaxin that may be involved in targeting and fusion of Golgi-derived retrograde transport vesicles with the ER. The polypeptide is Syntaxin-18 (Stx18) (Rattus norvegicus (Rat)).